Here is a 505-residue protein sequence, read N- to C-terminus: Activin receptor type-1B (505 aa).

A signal peptide spans M1–G23. Over S24–E126 the chain is Extracellular. The N-linked (GlcNAc...) asparagine glycan is linked to N43. The helical transmembrane segment at L127 to I149 threads the bilayer. Topologically, residues N150–I505 are cytoplasmic. The 30-residue stretch at K177–T206 folds into the GS domain. Residues I207–L497 form the Protein kinase domain. ATP-binding positions include I213–V221 and K234. The active-site Proton acceptor is D335. The residue at position 380 (Y380) is a Phosphotyrosine.

Belongs to the protein kinase superfamily. TKL Ser/Thr protein kinase family. TGFB receptor subfamily. As to quaternary structure, forms an activin receptor complex with activin receptor type-2 (ACVR2A or ACVR2B). Part of a complex consisting of MAGI2/ARIP1, ACVR2A, ACVR1B and SMAD3. Interacts with SMAD2 and SMAD3. Interacts with SMAD7. Interacts with FKBP1A. Interacts with IGSF1. Interacts with CRIPTO. Interacts with TDP2. Interacts with TSC22D1/TSC-22. Autophosphorylated. Phosphorylated by activin receptor type-2 (ACVR2A or ACVR2B) in response to activin-binding at serine and threonine residues in the GS domain. Phosphorylation of ACVR1B by activin receptor type-2 regulates association with SMAD7. Post-translationally, ubiquitinated. Level of ubiquitination is regulated by the SMAD7-SMURF1 complex. In terms of processing, ubiquitinated.

The protein localises to the cell membrane. The enzyme catalyses L-threonyl-[receptor-protein] + ATP = O-phospho-L-threonyl-[receptor-protein] + ADP + H(+). It catalyses the reaction L-seryl-[receptor-protein] + ATP = O-phospho-L-seryl-[receptor-protein] + ADP + H(+). With respect to regulation, activin receptor type-2 (ACVR2A or ACVR2B) activates the type-1 receptor through phosphorylation of its regulatory GS domain. In terms of biological role, transmembrane serine/threonine kinase activin type-1 receptor forming an activin receptor complex with activin receptor type-2 (ACVR2A or ACVR2B). Transduces the activin signal from the cell surface to the cytoplasm and is thus regulating a many physiological and pathological processes including neuronal differentiation and neuronal survival, hair follicle development and cycling, FSH production by the pituitary gland, wound healing, extracellular matrix production, immunosuppression and carcinogenesis. Activin is also thought to have a paracrine or autocrine role in follicular development in the ovary. Within the receptor complex, type-2 receptors (ACVR2A and/or ACVR2B) act as a primary activin receptors whereas the type-1 receptors like ACVR1B act as downstream transducers of activin signals. Activin binds to type-2 receptor at the plasma membrane and activates its serine-threonine kinase. The activated receptor type-2 then phosphorylates and activates the type-1 receptor such as ACVR1B. Once activated, the type-1 receptor binds and phosphorylates the SMAD proteins SMAD2 and SMAD3, on serine residues of the C-terminal tail. Soon after their association with the activin receptor and subsequent phosphorylation, SMAD2 and SMAD3 are released into the cytoplasm where they interact with the common partner SMAD4. This SMAD complex translocates into the nucleus where it mediates activin-induced transcription. Inhibitory SMAD7, which is recruited to ACVR1B through FKBP1A, can prevent the association of SMAD2 and SMAD3 with the activin receptor complex, thereby blocking the activin signal. Activin signal transduction is also antagonized by the binding to the receptor of inhibin-B via the IGSF1 inhibin coreceptor. ACVR1B also phosphorylates TDP2. In Mus musculus (Mouse), this protein is Activin receptor type-1B (Acvr1b).